The chain runs to 286 residues: GTP cyclohydrolase 1 type 2 homolog (286 aa).

A divalent metal cation-binding residues include histidine 66, histidine 67, aspartate 103, histidine 254, and glutamate 258.

This sequence belongs to the GTP cyclohydrolase I type 2/NIF3 family. Homohexamer.

The protein is GTP cyclohydrolase 1 type 2 homolog of Treponema pallidum (strain Nichols).